The following is a 90-amino-acid chain: uncharacterized protein (90 aa).

The tract at residues 53-90 (WRARPDANDADTTSSSSSSETCTESDDSSDVPPARYAV) is disordered. Positions 63-74 (DTTSSSSSSETC) are enriched in low complexity.

This is an uncharacterized protein from Orgyia pseudotsugata (Douglas-fir tussock moth).